Reading from the N-terminus, the 295-residue chain is N-acetylmuramic acid 6-phosphate etherase (295 aa).

The region spanning 55–218 (AADALKQGGR…STGAMVKLGK (164 aa)) is the SIS domain. Glutamate 83 (proton donor) is an active-site residue. Glutamate 114 is an active-site residue.

This sequence belongs to the GCKR-like family. MurNAc-6-P etherase subfamily. Homodimer.

It carries out the reaction N-acetyl-D-muramate 6-phosphate + H2O = N-acetyl-D-glucosamine 6-phosphate + (R)-lactate. Its pathway is amino-sugar metabolism; 1,6-anhydro-N-acetylmuramate degradation. It participates in amino-sugar metabolism; N-acetylmuramate degradation. It functions in the pathway cell wall biogenesis; peptidoglycan recycling. Functionally, specifically catalyzes the cleavage of the D-lactyl ether substituent of MurNAc 6-phosphate, producing GlcNAc 6-phosphate and D-lactate. Together with AnmK, is also required for the utilization of anhydro-N-acetylmuramic acid (anhMurNAc) either imported from the medium or derived from its own cell wall murein, and thus plays a role in cell wall recycling. The polypeptide is N-acetylmuramic acid 6-phosphate etherase (Yersinia pseudotuberculosis serotype O:1b (strain IP 31758)).